The chain runs to 474 residues: uncharacterized protein (474 aa).

Positions 1-14 are enriched in polar residues; the sequence is MGSRYPSHQLSNGL. A disordered region spans residues 1–137; that stretch reads MGSRYPSHQL…QSGGVTRQNS (137 aa). Serine 45 carries the post-translational modification Phosphoserine. Composition is skewed to polar residues over residues 73–83, 97–113, and 125–137; these read RSGSFAGTAQS, SLAS…NSGP, and SGPQ…RQNS. At serine 169 the chain carries Phosphoserine. The next 2 helical transmembrane spans lie at 210–230 and 236–256; these read VLWL…FILG and ILLV…IWNI.

The protein localises to the membrane. This is an uncharacterized protein from Arabidopsis thaliana (Mouse-ear cress).